The primary structure comprises 254 residues: K88 minor fimbrial subunit FaeI (254 aa).

The N-terminal stretch at 1–20 (MKKVTLFLFVVSLLPSTVLA) is a signal peptide.

This sequence belongs to the fimbrial K88 protein family.

The protein localises to the fimbrium. In terms of biological role, K88 minor fimbrial subunit, plays an essential role in the biogenesis of the K88 fimbriae. Fimbriae (also called pili), are polar filaments radiating from the surface of the bacterium to a length of 0.5-1.5 micrometers and numbering 100-300 per cell. They enable bacteria to colonize the epithelium of specific host organs. The polypeptide is K88 minor fimbrial subunit FaeI (faeI) (Escherichia coli).